The chain runs to 532 residues: Membrane protein insertase YidC (532 aa).

5 consecutive transmembrane segments (helical) span residues 7–27 (FFIF…QSQM), 336–356 (LTIL…ITFI), 413–433 (GGFL…YMLI), 450–470 (LSSQ…MFFI), and 492–512 (PVIF…YYII).

It belongs to the OXA1/ALB3/YidC family. Type 1 subfamily. Interacts with the Sec translocase complex via SecD. Specifically interacts with transmembrane segments of nascent integral membrane proteins during membrane integration.

The protein resides in the cell membrane. Functionally, required for the insertion and/or proper folding and/or complex formation of integral membrane proteins into the membrane. Involved in integration of membrane proteins that insert both dependently and independently of the Sec translocase complex, as well as at least some lipoproteins. Aids folding of multispanning membrane proteins. This chain is Membrane protein insertase YidC, found in Buchnera aphidicola subsp. Acyrthosiphon pisum (strain APS) (Acyrthosiphon pisum symbiotic bacterium).